A 343-amino-acid chain; its full sequence is Ribosomal RNA small subunit methyltransferase C (343 aa).

The protein belongs to the methyltransferase superfamily. RsmC family. In terms of assembly, monomer.

The protein resides in the cytoplasm. The enzyme catalyses guanosine(1207) in 16S rRNA + S-adenosyl-L-methionine = N(2)-methylguanosine(1207) in 16S rRNA + S-adenosyl-L-homocysteine + H(+). Functionally, specifically methylates the guanine in position 1207 of 16S rRNA in the 30S particle. This Escherichia coli O6:H1 (strain CFT073 / ATCC 700928 / UPEC) protein is Ribosomal RNA small subunit methyltransferase C.